Here is a 124-residue protein sequence, read N- to C-terminus: Fluoride-specific ion channel FluC (124 aa).

3 consecutive transmembrane segments (helical) span residues 5 to 27, 70 to 90, and 95 to 115; these read LFVA…FMLQ, VGLL…LLLI, and WIKA…MVYL. Na(+) is bound by residues G74 and T77.

The protein belongs to the fluoride channel Fluc/FEX (TC 1.A.43) family.

The protein resides in the cell inner membrane. The enzyme catalyses fluoride(in) = fluoride(out). Its activity is regulated as follows. Na(+) is not transported, but it plays an essential structural role and its presence is essential for fluoride channel function. Fluoride-specific ion channel. Important for reducing fluoride concentration in the cell, thus reducing its toxicity. This Shewanella sediminis (strain HAW-EB3) protein is Fluoride-specific ion channel FluC.